The primary structure comprises 433 residues: tRNA-2-methylthio-N(6)-dimethylallyladenosine synthase (433 aa).

Residues 4 to 119 enclose the MTTase N-terminal domain; the sequence is KKLFIQTLGC…ITQAIKTPKF (116 aa). [4Fe-4S] cluster contacts are provided by Cys13, Cys50, Cys82, Cys151, Cys155, and Cys158. One can recognise a Radical SAM core domain in the interval 137–370; the sequence is RNSIYKSYIN…QNRHSEILDE (234 aa). The TRAM domain maps to 373–433; that stretch reads KKQENKTFKV…KRMVLYGEIV (61 aa).

The protein belongs to the methylthiotransferase family. MiaB subfamily. As to quaternary structure, monomer. [4Fe-4S] cluster is required as a cofactor.

It is found in the cytoplasm. It catalyses the reaction N(6)-dimethylallyladenosine(37) in tRNA + (sulfur carrier)-SH + AH2 + 2 S-adenosyl-L-methionine = 2-methylsulfanyl-N(6)-dimethylallyladenosine(37) in tRNA + (sulfur carrier)-H + 5'-deoxyadenosine + L-methionine + A + S-adenosyl-L-homocysteine + 2 H(+). Its function is as follows. Catalyzes the methylthiolation of N6-(dimethylallyl)adenosine (i(6)A), leading to the formation of 2-methylthio-N6-(dimethylallyl)adenosine (ms(2)i(6)A) at position 37 in tRNAs that read codons beginning with uridine. The polypeptide is tRNA-2-methylthio-N(6)-dimethylallyladenosine synthase (Campylobacter jejuni (strain RM1221)).